The primary structure comprises 198 residues: Na(+)-translocating NADH-quinone reductase subunit E (198 aa).

6 helical membrane passes run Ala-11 to Val-31, Phe-39 to Val-59, Phe-77 to Ile-97, Leu-109 to Met-129, Ile-140 to Ile-160, and Leu-176 to Val-196.

This sequence belongs to the NqrDE/RnfAE family. As to quaternary structure, composed of six subunits; NqrA, NqrB, NqrC, NqrD, NqrE and NqrF.

Its subcellular location is the cell inner membrane. The catalysed reaction is a ubiquinone + n Na(+)(in) + NADH + H(+) = a ubiquinol + n Na(+)(out) + NAD(+). Functionally, NQR complex catalyzes the reduction of ubiquinone-1 to ubiquinol by two successive reactions, coupled with the transport of Na(+) ions from the cytoplasm to the periplasm. NqrA to NqrE are probably involved in the second step, the conversion of ubisemiquinone to ubiquinol. This chain is Na(+)-translocating NADH-quinone reductase subunit E, found in Proteus mirabilis (strain HI4320).